A 217-amino-acid chain; its full sequence is Large ribosomal subunit protein uL3 (217 aa).

The tract at residues 135 to 154 (ATHGNSLSHRAPGSIGQCQT) is disordered. Position 153 is an N5-methylglutamine (Q153).

Belongs to the universal ribosomal protein uL3 family. Part of the 50S ribosomal subunit. Forms a cluster with proteins L14 and L19. Post-translationally, methylated by PrmB.

One of the primary rRNA binding proteins, it binds directly near the 3'-end of the 23S rRNA, where it nucleates assembly of the 50S subunit. The polypeptide is Large ribosomal subunit protein uL3 (Coxiella burnetii (strain CbuG_Q212) (Coxiella burnetii (strain Q212))).